Here is an 82-residue protein sequence, read N- to C-terminus: Metallothionein (82 aa).

10 residues coordinate Cd(2+): C6, C8, C11, C13, C29, C33, H37, C43, C48, and C50. Zn(2+) is bound by residues C6, C8, and C11. The Zn(2+) site is built by C29, C33, H37, C43, C48, and C50. A disordered region spans residues 61–82 (ITNNQLDEALEETFPASDPISP).

This sequence belongs to the metallothionein superfamily.

Functionally, metallothioneins are small proteins that have a high content of cysteine residues which allow them to bind heavy metal ions through clusters of thiolate bonds. Preferentially, binds four Cd(2+) ions. Also binds three Zn(2+) ions but with less affinity. Required for long-term viability. May play a role in the storage or sequestration of metals when present in excess. This is Metallothionein from Pseudomonas fluorescens (strain Q2-87).